Reading from the N-terminus, the 120-residue chain is Large ribosomal subunit protein uL18 (120 aa).

Belongs to the universal ribosomal protein uL18 family. Part of the 50S ribosomal subunit; part of the 5S rRNA/L5/L18/L25 subcomplex. Contacts the 5S and 23S rRNAs.

In terms of biological role, this is one of the proteins that bind and probably mediate the attachment of the 5S RNA into the large ribosomal subunit, where it forms part of the central protuberance. The protein is Large ribosomal subunit protein uL18 of Clostridium novyi (strain NT).